The sequence spans 173 residues: Acireductone dioxygenase (173 aa).

A disordered region spans residues 1–21 (MKFYYHDNDSSVDQCAPHDSG). The Fe(2+) site is built by His84, His86, Glu90, and His129. Positions 84, 86, 90, and 129 each coordinate Ni(2+).

This sequence belongs to the acireductone dioxygenase (ARD) family. Requires Fe(2+) as cofactor. The cofactor is Ni(2+).

It is found in the cytoplasm. Its subcellular location is the nucleus. The enzyme catalyses 1,2-dihydroxy-5-(methylsulfanyl)pent-1-en-3-one + O2 = 4-methylsulfanyl-2-oxobutanoate + formate + 2 H(+). The catalysed reaction is 1,2-dihydroxy-5-(methylsulfanyl)pent-1-en-3-one + O2 = 3-(methylsulfanyl)propanoate + CO + formate + 2 H(+). It participates in amino-acid biosynthesis; L-methionine biosynthesis via salvage pathway; L-methionine from S-methyl-5-thio-alpha-D-ribose 1-phosphate: step 5/6. Functionally, catalyzes 2 different reactions between oxygen and the acireductone 1,2-dihydroxy-3-keto-5-methylthiopentene (DHK-MTPene) depending upon the metal bound in the active site. Fe-containing acireductone dioxygenase (Fe-ARD) produces formate and 2-keto-4-methylthiobutyrate (KMTB), the alpha-ketoacid precursor of methionine in the methionine recycle pathway. Ni-containing acireductone dioxygenase (Ni-ARD) produces methylthiopropionate, carbon monoxide and formate, and does not lie on the methionine recycle pathway. The sequence is that of Acireductone dioxygenase from Yarrowia lipolytica (strain CLIB 122 / E 150) (Yeast).